Here is a 322-residue protein sequence, read N- to C-terminus: Tetraacyldisaccharide 4'-kinase (322 aa).

40–47 lines the ATP pocket; sequence CVGGTGKT.

It belongs to the LpxK family.

The enzyme catalyses a lipid A disaccharide + ATP = a lipid IVA + ADP + H(+). Its pathway is glycolipid biosynthesis; lipid IV(A) biosynthesis; lipid IV(A) from (3R)-3-hydroxytetradecanoyl-[acyl-carrier-protein] and UDP-N-acetyl-alpha-D-glucosamine: step 6/6. In terms of biological role, transfers the gamma-phosphate of ATP to the 4'-position of a tetraacyldisaccharide 1-phosphate intermediate (termed DS-1-P) to form tetraacyldisaccharide 1,4'-bis-phosphate (lipid IVA). The chain is Tetraacyldisaccharide 4'-kinase from Koribacter versatilis (strain Ellin345).